Consider the following 603-residue polypeptide: Probable GMP synthase [glutamine-hydrolyzing] (603 aa).

The Glutamine amidotransferase type-1 domain occupies 6–195; sequence KIAVVDFGGQ…FIQICGVSKT (190 aa). The Nucleophile role is filled by Cys-81. Active-site residues include His-170 and Glu-172. A GMPS ATP-PPase domain is found at 196–392; it reads WGIDQFLKEK…LGLESEWVGR (197 aa). 224–230 lines the ATP pocket; that stretch reads SGGVDST.

In terms of assembly, homodimer.

The catalysed reaction is XMP + L-glutamine + ATP + H2O = GMP + L-glutamate + AMP + diphosphate + 2 H(+). The protein operates within purine metabolism; GMP biosynthesis; GMP from XMP (L-Gln route): step 1/1. Functionally, catalyzes the synthesis of GMP from XMP. In Leptospira interrogans serogroup Icterohaemorrhagiae serovar copenhageni (strain Fiocruz L1-130), this protein is Probable GMP synthase [glutamine-hydrolyzing] (guaA).